The following is a 227-amino-acid chain: Ribosomal RNA large subunit methyltransferase E (227 aa).

Gly-78, Trp-80, Asp-103, Asp-119, and Asp-143 together coordinate S-adenosyl-L-methionine. Lys-183 functions as the Proton acceptor in the catalytic mechanism.

It belongs to the class I-like SAM-binding methyltransferase superfamily. RNA methyltransferase RlmE family.

The protein localises to the cytoplasm. It catalyses the reaction uridine(2552) in 23S rRNA + S-adenosyl-L-methionine = 2'-O-methyluridine(2552) in 23S rRNA + S-adenosyl-L-homocysteine + H(+). Its function is as follows. Specifically methylates the uridine in position 2552 of 23S rRNA at the 2'-O position of the ribose in the fully assembled 50S ribosomal subunit. This Rickettsia bellii (strain RML369-C) protein is Ribosomal RNA large subunit methyltransferase E.